Consider the following 1088-residue polypeptide: PAN2-PAN3 deadenylation complex catalytic subunit pan2 (1088 aa).

WD repeat units follow at residues 16–56, 136–175, 178–224, and 270–309; these read VSTC…YTQF, HKDKNVSDIFIMRRNRLLCCGSTNGEIILRDPNSFQPVNK, AHTG…SLVP, and PLTSYLTGMDIASTGDAMVFTDVEDNIHLWSPLENPSFSD. The linker stretch occupies residues 309–443; that stretch reads DLKLPIQLPN…EDTISGPDSI (135 aa). The region spanning 443-814 is the USP domain; the sequence is IPKFYQRPVI…IPIIVYYEKL (372 aa). In terms of domain architecture, Exonuclease spans 860–1033; sequence VGIDSEFVAL…EDALTALKLY (174 aa). A divalent metal cation contacts are provided by aspartate 863, glutamate 865, aspartate 972, and aspartate 1025.

This sequence belongs to the peptidase C19 family. PAN2 subfamily. Forms a heterotrimer with an asymmetric homodimer of the regulatory subunit ppk26/pan3 to form the poly(A)-nuclease (PAN) deadenylation complex. A divalent metal cation is required as a cofactor.

It localises to the cytoplasm. It catalyses the reaction Exonucleolytic cleavage of poly(A) to 5'-AMP.. Its activity is regulated as follows. Positively regulated by the regulatory subunit ppk26/pan3. Functionally, catalytic subunit of the poly(A)-nuclease (PAN) deadenylation complex, one of two cytoplasmic mRNA deadenylases involved in mRNA turnover. PAN specifically shortens poly(A) tails of RNA and the activity is stimulated by poly(A)-binding protein pab1. PAN deadenylation is followed by rapid degradation of the shortened mRNA tails by the CCR4-NOT complex. Deadenylated mRNAs are then degraded by two alternative mechanisms, namely exosome-mediated 3'-5' exonucleolytic degradation, or deadenylation-dependent mRNA decaping and subsequent 5'-3' exonucleolytic degradation by xrn1. May also be involved in post-transcriptional maturation of mRNA poly(A) tails. The chain is PAN2-PAN3 deadenylation complex catalytic subunit pan2 from Schizosaccharomyces pombe (strain 972 / ATCC 24843) (Fission yeast).